The chain runs to 451 residues: Tryptophan--tRNA ligase (451 aa).

Residues 10–12 (TTT) and 18–19 (GN) contribute to the ATP site. The 'HIGH' region motif lies at 11–19 (TTGTPHLGN). Asp-143 contacts L-tryptophan. Residues 155-157 (GRD), Leu-195, and 202-206 (KMSKS) contribute to the ATP site. A 'KMSKS' region motif is present at residues 202–206 (KMSKS).

It belongs to the class-I aminoacyl-tRNA synthetase family. Homodimer.

The protein resides in the cytoplasm. The enzyme catalyses tRNA(Trp) + L-tryptophan + ATP = L-tryptophyl-tRNA(Trp) + AMP + diphosphate + H(+). Catalyzes the attachment of tryptophan to tRNA(Trp). This is Tryptophan--tRNA ligase from Bordetella bronchiseptica (strain ATCC BAA-588 / NCTC 13252 / RB50) (Alcaligenes bronchisepticus).